Here is a 149-residue protein sequence, read N- to C-terminus: 3-hydroxyacyl-[acyl-carrier-protein] dehydratase FabZ (149 aa).

Residue His47 is part of the active site.

The protein belongs to the thioester dehydratase family. FabZ subfamily.

It is found in the cytoplasm. It catalyses the reaction a (3R)-hydroxyacyl-[ACP] = a (2E)-enoyl-[ACP] + H2O. In terms of biological role, involved in unsaturated fatty acids biosynthesis. Catalyzes the dehydration of short chain beta-hydroxyacyl-ACPs and long chain saturated and unsaturated beta-hydroxyacyl-ACPs. The sequence is that of 3-hydroxyacyl-[acyl-carrier-protein] dehydratase FabZ from Thioalkalivibrio sulfidiphilus (strain HL-EbGR7).